A 375-amino-acid chain; its full sequence is Beta sliding clamp (375 aa).

This sequence belongs to the beta sliding clamp family. In terms of assembly, forms a ring-shaped head-to-tail homodimer around DNA which binds and tethers DNA polymerases and other proteins to the DNA. The DNA replisome complex has a single clamp-loading complex (3 tau and 1 each of delta, delta', psi and chi subunits) which binds 3 Pol III cores (1 core on the leading strand and 2 on the lagging strand) each with a beta sliding clamp dimer. Additional proteins in the replisome are other copies of gamma, psi and chi, Ssb, DNA helicase and RNA primase.

The protein localises to the cytoplasm. Confers DNA tethering and processivity to DNA polymerases and other proteins. Acts as a clamp, forming a ring around DNA (a reaction catalyzed by the clamp-loading complex) which diffuses in an ATP-independent manner freely and bidirectionally along dsDNA. Initially characterized for its ability to contact the catalytic subunit of DNA polymerase III (Pol III), a complex, multichain enzyme responsible for most of the replicative synthesis in bacteria; Pol III exhibits 3'-5' exonuclease proofreading activity. The beta chain is required for initiation of replication as well as for processivity of DNA replication. The polypeptide is Beta sliding clamp (dnaN) (Synechococcus elongatus (strain ATCC 33912 / PCC 7942 / FACHB-805) (Anacystis nidulans R2)).